A 74-amino-acid chain; its full sequence is Conotoxin VnMEKL-0222 (74 aa).

Residues 1 to 19 (MEKLTILLLVAAVLMSTQA) form the signal peptide. Positions 20–46 (LIQEKRPKEKIKFLSKRKSIPESWWEG) are excised as a propeptide. 3 cysteine pairs are disulfide-bonded: Cys48–Cys62, Cys55–Cys66, and Cys61–Cys71.

This sequence belongs to the conotoxin O2 superfamily. As to expression, expressed by the venom duct.

It is found in the secreted. This chain is Conotoxin VnMEKL-0222, found in Conus ventricosus (Mediterranean cone).